A 458-amino-acid chain; its full sequence is Tyrosine phenol-lyase (458 aa).

Residue Lys-258 is modified to N6-(pyridoxal phosphate)lysine.

The protein belongs to the beta-eliminating lyase family. Homotetramer. It depends on pyridoxal 5'-phosphate as a cofactor.

The enzyme catalyses L-tyrosine + H2O = phenol + pyruvate + NH4(+). In Pasteurella multocida (strain Pm70), this protein is Tyrosine phenol-lyase (tpl).